The following is a 435-amino-acid chain: RuBisCO large subunit-binding protein subunit beta-1 (435 aa).

This sequence belongs to the chaperonin (HSP60) family. In terms of assembly, oligomer of probably six alpha and six beta subunits.

The protein localises to the plastid. It localises to the chloroplast. In terms of biological role, this protein binds RuBisCO small and large subunits and is implicated in the assembly of the enzyme oligomer. The sequence is that of RuBisCO large subunit-binding protein subunit beta-1 from Chlamydomonas reinhardtii (Chlamydomonas smithii).